We begin with the raw amino-acid sequence, 303 residues long: 4-diphosphocytidyl-2-C-methyl-D-erythritol kinase (303 aa).

Lysine 18 is an active-site residue. ATP is bound at residue 111-121; sequence PVASGIGGGSA. Residue aspartate 153 is part of the active site.

The protein belongs to the GHMP kinase family. IspE subfamily.

The catalysed reaction is 4-CDP-2-C-methyl-D-erythritol + ATP = 4-CDP-2-C-methyl-D-erythritol 2-phosphate + ADP + H(+). The protein operates within isoprenoid biosynthesis; isopentenyl diphosphate biosynthesis via DXP pathway; isopentenyl diphosphate from 1-deoxy-D-xylulose 5-phosphate: step 3/6. Its function is as follows. Catalyzes the phosphorylation of the position 2 hydroxy group of 4-diphosphocytidyl-2C-methyl-D-erythritol. The polypeptide is 4-diphosphocytidyl-2-C-methyl-D-erythritol kinase (Sinorhizobium medicae (strain WSM419) (Ensifer medicae)).